Reading from the N-terminus, the 201-residue chain is MLLTRKNVAVRPARAARRDVRAMSLLGNLFGGGSKPTSSTSNFHQLSALDIDKKNVDFKSLNNRVVLVVNVASKUGLTAANYKEFATLLGKYPATDLTIVAFPCNQFGGQEPGTNAEIKAFASARGFSGAGALLMDKVDVNGANASPVYNFLKVAAGDTSDIGWNFGKFLVRPDGTVFGRYAPTTGPLSLEKYIVELINSR.

A mitochondrion-targeting transit peptide spans 1–27 (MLLTRKNVAVRPARAARRDVRAMSLLG). The active site involves U75. A non-standard amino acid (selenocysteine) is located at residue U75.

The protein localises to the mitochondrion. It catalyses the reaction 2 glutathione + H2O2 = glutathione disulfide + 2 H2O. In terms of biological role, may constitute a glutathione peroxidase-like protective system against oxidative stresses. Hydrogen peroxide, tert-butyl hydroperoxide and cumene, but not phosphatidylcholine hydroperoxide, can act as acceptors. The chain is Glutathione peroxidase 1, mitochondrial from Chlamydomonas reinhardtii (Chlamydomonas smithii).